The following is a 472-amino-acid chain: Glutamate synthase [NADPH] small chain (472 aa).

The 4Fe-4S ferredoxin-type domain occupies 38–69; it reads GQAKAQADRCLSCGNPYCEWKCPVHNYIPNWL. The [4Fe-4S] cluster site is built by Cys-47, Cys-50, Cys-55, and Cys-59.

In terms of assembly, aggregate of 4 catalytic active heterodimers, consisting of a large and a small subunit. The cofactor is [4Fe-4S] cluster.

The catalysed reaction is 2 L-glutamate + NADP(+) = L-glutamine + 2-oxoglutarate + NADPH + H(+). Its pathway is amino-acid biosynthesis; L-glutamate biosynthesis via GLT pathway; L-glutamate from 2-oxoglutarate and L-glutamine (NADP(+) route): step 1/1. It participates in energy metabolism; nitrogen metabolism. Functionally, catalyzes the conversion of L-glutamine and 2-oxoglutarate into two molecules of L-glutamate. This Escherichia coli (strain K12) protein is Glutamate synthase [NADPH] small chain (gltD).